The chain runs to 396 residues: MLLTVYCVRRDLSEATFSLQVRPDFELHNFLVLCELESGIPAEETQIVYMERLLVNDHCSLGSYGLKDGDMVILLQKEAMRPRSPERAAGLCSMEPAGPALPGTSGSRPHQRAQSAQHSSRRGSGEKAGPGQGLDSPALVRSMLLSSPHDLSLLKERNPSLAEALLSGNLESFSQVLMEQQRERALREQERLRLFSADPFDLEAQAKIEEEIRQQNIEENMSIAMEEAPESFGQVAMLYINCRVNGHPLKAFVDSGAQMTIMNQVCAERCNIIRLVDRRWAGVAKGVGTQRILGRVHLAQIQIEGDFLQCSFSILEEQPMDMLLGLDMLRRHQCSIDLKRNVLVIGTTGTQTSFLPEGELPPCAKLVSGMGPEESSDKETANAIKHSVMDSGRKKH.

The Ubiquitin-like domain maps to 1–81; the sequence is MLLTVYCVRR…VILLQKEAMR (81 aa). Positions 84–137 are disordered; sequence SPERAAGLCSMEPAGPALPGTSGSRPHQRAQSAQHSSRRGSGEKAGPGQGLDSP. The segment covering 104 to 118 has biased composition (polar residues); that stretch reads TSGSRPHQRAQSAQH. Aspartate 254 is an active-site residue. The tract at residues 367–396 is disordered; sequence VSGMGPEESSDKETANAIKHSVMDSGRKKH. Basic and acidic residues predominate over residues 387 to 396; it reads SVMDSGRKKH.

The protein belongs to the DDI1 family.

In terms of biological role, probable aspartic protease. Seems to act as a proteasomal shuttle which links the proteasome and replication fork proteins like RTF2. Required, with DDI2, for cellular survival following replication stress. Together or redudantly with DDI2, removes RTF2 from stalled forks to allow cell cycle progression after replication stress and maintains genome integrity. This Bos taurus (Bovine) protein is Protein DDI1 homolog 1 (DDI1).